A 176-amino-acid chain; its full sequence is Mitochondrial inner membrane protein Mpv17 (176 aa).

The next 4 membrane-spanning stretches (helical) occupy residues 18-38 (VQVLTAGSLMGLGDIISQQLV), 57-77 (LGCGFVGPVVGGWYRVLDHLI), 94-114 (GGFAPCFLGCFLPLVGVLNGM), and 131-151 (LITNYYLWPAVQLANFYLVPL).

It belongs to the peroxisomal membrane protein PXMP2/4 family.

The protein resides in the mitochondrion inner membrane. Non-selective channel that modulates the membrane potential under normal conditions and oxidative stress, and is involved in mitochondrial homeostasis. Involved in mitochondrial deoxynucleoside triphosphates (dNTP) pool homeostasis and mitochondrial DNA (mtDNA) maintenance. May be involved in the regulation of reactive oxygen species metabolism and the control of oxidative phosphorylation. This Rattus norvegicus (Rat) protein is Mitochondrial inner membrane protein Mpv17.